Reading from the N-terminus, the 32-residue chain is uncharacterized protein (32 aa).

A helical membrane pass occupies residues 3–23 (IGIIFPVVIFITAVVFLAWFF).

The protein localises to the cell inner membrane. This is an uncharacterized protein from Escherichia coli (strain K12).